We begin with the raw amino-acid sequence, 216 residues long: Mite allergen Lep d 7 (216 aa).

An N-terminal signal peptide occupies residues 1–19 (MQYLAIAVIVALAGLSAAA).

It belongs to the mite group 7 allergen family.

The protein localises to the secreted. This chain is Mite allergen Lep d 7, found in Lepidoglyphus destructor (Storage mite).